The chain runs to 451 residues: Portal protein (451 aa).

It belongs to the SPP1-like portal protein family. Homododecamer.

The protein localises to the virion. Functionally, forms the portal vertex of the capsid. This portal plays critical roles in head assembly, genome packaging, neck/tail attachment, and genome ejection. The portal protein multimerizes as a single ring-shaped homododecamer arranged around a central channel. Binds to the terminase subunits to form the packaging machine. The sequence is that of Portal protein from Clostridium phage phiCD119 (strain Clostridium difficile/United States/Govind/2006) (Bacteriophage phiCD119).